The chain runs to 293 residues: DNA repair protein RecO (293 aa).

Belongs to the RecO family.

In terms of biological role, involved in DNA repair and RecF pathway recombination. This is DNA repair protein RecO from Acaryochloris marina (strain MBIC 11017).